Here is a 140-residue protein sequence, read N- to C-terminus: Thymic stromal lymphopoietin (140 aa).

The first 19 residues, 1-19, serve as a signal peptide directing secretion; the sequence is MVLLRSLFILQVLVRMGLT. Asn21 and Asn26 each carry an N-linked (GlcNAc...) asparagine glycan. Cystine bridges form between Cys25/Cys98, Cys57/Cys63, and Cys78/Cys121. An N-linked (GlcNAc...) asparagine glycan is attached at Asn123.

In terms of assembly, interacts with a receptor composed of CRLF2 and IL7R. Binding of TSLP to CRLF2/TSLPR is a mechanistic prerequisite for recruitment of IL7R to the high-affinity ternary complex.

It is found in the secreted. In terms of biological role, cytokine that induces the release of T-cell-attracting chemokines from monocytes and, in particular, enhances the maturation of CD11c(+) dendritic cells. Can induce allergic inflammation by directly activating mast cells. This Mus musculus (Mouse) protein is Thymic stromal lymphopoietin (Tslp).